We begin with the raw amino-acid sequence, 827 residues long: Lon protease (827 aa).

Residues 38-233 enclose the Lon N-terminal domain; sequence LTLLASKYNV…VLLKYLLKDL (196 aa). 384–391 is a binding site for ATP; sequence GPPGVGKT. Positions 619 to 800 constitute a Lon proteolytic domain; the sequence is THLPGVAIGL…EEVIQLALQP (182 aa). Active-site residues include serine 706 and lysine 749.

This sequence belongs to the peptidase S16 family. As to quaternary structure, homohexamer. Organized in a ring with a central cavity.

Its subcellular location is the cytoplasm. It carries out the reaction Hydrolysis of proteins in presence of ATP.. ATP-dependent serine protease that mediates the selective degradation of mutant and abnormal proteins as well as certain short-lived regulatory proteins. Required for cellular homeostasis and for survival from DNA damage and developmental changes induced by stress. Degrades polypeptides processively to yield small peptide fragments that are 5 to 10 amino acids long. Binds to DNA in a double-stranded, site-specific manner. This chain is Lon protease, found in Amoebophilus asiaticus (strain 5a2).